A 501-amino-acid chain; its full sequence is Bifunctional purine biosynthesis protein PurH (501 aa).

One can recognise an MGS-like domain in the interval 1–144 (MKKRALISVF…KNFKDVVVLS (144 aa)).

This sequence belongs to the PurH family.

The catalysed reaction is (6R)-10-formyltetrahydrofolate + 5-amino-1-(5-phospho-beta-D-ribosyl)imidazole-4-carboxamide = 5-formamido-1-(5-phospho-D-ribosyl)imidazole-4-carboxamide + (6S)-5,6,7,8-tetrahydrofolate. The enzyme catalyses IMP + H2O = 5-formamido-1-(5-phospho-D-ribosyl)imidazole-4-carboxamide. It participates in purine metabolism; IMP biosynthesis via de novo pathway; 5-formamido-1-(5-phospho-D-ribosyl)imidazole-4-carboxamide from 5-amino-1-(5-phospho-D-ribosyl)imidazole-4-carboxamide (10-formyl THF route): step 1/1. The protein operates within purine metabolism; IMP biosynthesis via de novo pathway; IMP from 5-formamido-1-(5-phospho-D-ribosyl)imidazole-4-carboxamide: step 1/1. The protein is Bifunctional purine biosynthesis protein PurH of Clostridium perfringens (strain ATCC 13124 / DSM 756 / JCM 1290 / NCIMB 6125 / NCTC 8237 / Type A).